Here is a 495-residue protein sequence, read N- to C-terminus: Putative aldehyde dehydrogenase AldA (495 aa).

212-218 serves as a coordination point for NAD(+); sequence GKGSESG. Active-site residues include Glu256 and Cys290.

This sequence belongs to the aldehyde dehydrogenase family.

The enzyme catalyses an aldehyde + NAD(+) + H2O = a carboxylate + NADH + 2 H(+). This is Putative aldehyde dehydrogenase AldA (aldA) from Staphylococcus aureus (strain bovine RF122 / ET3-1).